The chain runs to 536 residues: 2-isopropylmalate synthase (536 aa).

The Pyruvate carboxyltransferase domain occupies 8–273 (VLIFDTTLRD…FFGRDPESPT (266 aa)). Mn(2+)-binding residues include D17, H208, H210, and N244. The tract at residues 408-536 (QLQLVQVSCG…PQHDLIKANL (129 aa)) is regulatory domain.

The protein belongs to the alpha-IPM synthase/homocitrate synthase family. LeuA type 1 subfamily. Homodimer. Requires Mn(2+) as cofactor.

Its subcellular location is the cytoplasm. It carries out the reaction 3-methyl-2-oxobutanoate + acetyl-CoA + H2O = (2S)-2-isopropylmalate + CoA + H(+). Its pathway is amino-acid biosynthesis; L-leucine biosynthesis; L-leucine from 3-methyl-2-oxobutanoate: step 1/4. Its function is as follows. Catalyzes the condensation of the acetyl group of acetyl-CoA with 3-methyl-2-oxobutanoate (2-ketoisovalerate) to form 3-carboxy-3-hydroxy-4-methylpentanoate (2-isopropylmalate). This chain is 2-isopropylmalate synthase, found in Prochlorococcus marinus (strain MIT 9211).